Here is a 250-residue protein sequence, read N- to C-terminus: UDP-2,3-diacylglucosamine hydrolase (250 aa).

Mn(2+) contacts are provided by Asp7, His9, Asp40, Asn78, and His113. Residue 78–79 (NR) participates in substrate binding. Substrate-binding residues include Asp121, Ser159, Thr163, Lys166, and His194. Positions 194 and 196 each coordinate Mn(2+).

This sequence belongs to the LpxH family. The cofactor is Mn(2+).

The protein localises to the cell inner membrane. It carries out the reaction UDP-2-N,3-O-bis[(3R)-3-hydroxytetradecanoyl]-alpha-D-glucosamine + H2O = 2-N,3-O-bis[(3R)-3-hydroxytetradecanoyl]-alpha-D-glucosaminyl 1-phosphate + UMP + 2 H(+). Its pathway is glycolipid biosynthesis; lipid IV(A) biosynthesis; lipid IV(A) from (3R)-3-hydroxytetradecanoyl-[acyl-carrier-protein] and UDP-N-acetyl-alpha-D-glucosamine: step 4/6. In terms of biological role, hydrolyzes the pyrophosphate bond of UDP-2,3-diacylglucosamine to yield 2,3-diacylglucosamine 1-phosphate (lipid X) and UMP by catalyzing the attack of water at the alpha-P atom. Involved in the biosynthesis of lipid A, a phosphorylated glycolipid that anchors the lipopolysaccharide to the outer membrane of the cell. This is UDP-2,3-diacylglucosamine hydrolase from Pseudomonas fluorescens (strain ATCC BAA-477 / NRRL B-23932 / Pf-5).